The sequence spans 342 residues: Porphobilinogen deaminase (342 aa).

S-(dipyrrolylmethanemethyl)cysteine is present on C249. A disordered region spans residues A323–E342.

This sequence belongs to the HMBS family. In terms of assembly, monomer. Dipyrromethane serves as cofactor.

The catalysed reaction is 4 porphobilinogen + H2O = hydroxymethylbilane + 4 NH4(+). Its pathway is porphyrin-containing compound metabolism; protoporphyrin-IX biosynthesis; coproporphyrinogen-III from 5-aminolevulinate: step 2/4. Tetrapolymerization of the monopyrrole PBG into the hydroxymethylbilane pre-uroporphyrinogen in several discrete steps. This chain is Porphobilinogen deaminase, found in Paraburkholderia phytofirmans (strain DSM 17436 / LMG 22146 / PsJN) (Burkholderia phytofirmans).